A 101-amino-acid polypeptide reads, in one-letter code: Small ribosomal subunit protein uS14 (101 aa).

Belongs to the universal ribosomal protein uS14 family. As to quaternary structure, part of the 30S ribosomal subunit. Contacts proteins S3 and S10.

In terms of biological role, binds 16S rRNA, required for the assembly of 30S particles and may also be responsible for determining the conformation of the 16S rRNA at the A site. The sequence is that of Small ribosomal subunit protein uS14 from Ehrlichia canis (strain Jake).